Reading from the N-terminus, the 282-residue chain is E3 ubiquitin-protein ligase Siah1 (282 aa).

Residues 1–28 (MSRQTATALPTGTSKCPPSQRVPTLSGT) are disordered. Residues 41 to 76 (CPVCFDYVLPPILQCQSGHLVCSNCRPKLTCCPTCR) form an RING-type zinc finger. Residues 90 to 282 (VANSVLFPCK…LGINVTISMC (193 aa)) are SBD. An SIAH-type zinc finger spans residues 93–153 (SVLFPCKYAS…VMPHLLHQHK (61 aa)). Cys98, Cys105, His117, Cys121, Cys128, Cys135, His147, and His152 together coordinate Zn(2+).

It belongs to the SINA (Seven in absentia) family. In terms of assembly, homodimer.

It carries out the reaction S-ubiquitinyl-[E2 ubiquitin-conjugating enzyme]-L-cysteine + [acceptor protein]-L-lysine = [E2 ubiquitin-conjugating enzyme]-L-cysteine + N(6)-ubiquitinyl-[acceptor protein]-L-lysine.. It functions in the pathway protein modification; protein ubiquitination. Its function is as follows. E3 ubiquitin-protein ligase that mediates ubiquitination and subsequent proteasomal degradation of target proteins. E3 ubiquitin ligases accept ubiquitin from an E2 ubiquitin-conjugating enzyme in the form of a thioester and then directly transfers the ubiquitin to targeted substrates. It probably triggers the ubiquitin-mediated degradation of different substrates. This chain is E3 ubiquitin-protein ligase Siah1 (siah1), found in Danio rerio (Zebrafish).